The primary structure comprises 274 residues: Large ribosomal subunit protein uL2cz/uL2cy (274 aa).

Disordered regions lie at residues 1–33 and 223–265; these read MAIHLYKTSTPSTRKRAVDSQGKSNPRNHLIYG and MNPV…KYND.

It belongs to the universal ribosomal protein uL2 family. As to quaternary structure, part of the 50S ribosomal subunit.

The protein localises to the plastid. The protein resides in the chloroplast. The polypeptide is Large ribosomal subunit protein uL2cz/uL2cy (rpl2-A) (Pelargonium hortorum (Common geranium)).